We begin with the raw amino-acid sequence, 312 residues long: Coproporphyrin III ferrochelatase (312 aa).

Fe-coproporphyrin III is bound by residues Tyr-13, Arg-30, 46 to 47 (RY), Ser-54, and Tyr-125. 2 residues coordinate Fe(2+): His-182 and Glu-263.

The protein belongs to the ferrochelatase family.

It is found in the cytoplasm. The catalysed reaction is Fe-coproporphyrin III + 2 H(+) = coproporphyrin III + Fe(2+). It functions in the pathway porphyrin-containing compound metabolism; protoheme biosynthesis. Functionally, involved in coproporphyrin-dependent heme b biosynthesis. Catalyzes the insertion of ferrous iron into coproporphyrin III to form Fe-coproporphyrin III. The sequence is that of Coproporphyrin III ferrochelatase from Oceanobacillus iheyensis (strain DSM 14371 / CIP 107618 / JCM 11309 / KCTC 3954 / HTE831).